The following is a 292-amino-acid chain: D-alanyl-D-alanine endopeptidase (292 aa).

The first 18 residues, 1–18, serve as a signal peptide directing secretion; sequence MFKKALFILSLCPSFALA. Serine 45 (acyl-ester intermediate) is an active-site residue. Lysine 48 (proton acceptor) is an active-site residue. Serine 102 is an active-site residue. Lysine 207 serves as a coordination point for substrate.

This sequence belongs to the peptidase S11 family.

The protein resides in the periplasm. In terms of biological role, cell wall formation. May play a specialized role in remodeling the cell wall. Specifically hydrolyzes the DD-diaminopimelate-alanine bonds in high-molecular-mass murein sacculi. This chain is D-alanyl-D-alanine endopeptidase (pbpG), found in Haemophilus influenzae (strain ATCC 51907 / DSM 11121 / KW20 / Rd).